The primary structure comprises 446 residues: Exodeoxyribonuclease 7 large subunit (446 aa).

It belongs to the XseA family. Heterooligomer composed of large and small subunits.

It localises to the cytoplasm. The catalysed reaction is Exonucleolytic cleavage in either 5'- to 3'- or 3'- to 5'-direction to yield nucleoside 5'-phosphates.. In terms of biological role, bidirectionally degrades single-stranded DNA into large acid-insoluble oligonucleotides, which are then degraded further into small acid-soluble oligonucleotides. This Streptococcus equi subsp. zooepidemicus (strain MGCS10565) protein is Exodeoxyribonuclease 7 large subunit.